The primary structure comprises 104 residues: Urease subunit gamma (104 aa).

This sequence belongs to the urease gamma subunit family. In terms of assembly, heterotrimer of UreA (gamma), UreB (beta) and UreC (alpha) subunits. Three heterotrimers associate to form the active enzyme.

It localises to the cytoplasm. It carries out the reaction urea + 2 H2O + H(+) = hydrogencarbonate + 2 NH4(+). Its pathway is nitrogen metabolism; urea degradation; CO(2) and NH(3) from urea (urease route): step 1/1. This is Urease subunit gamma from Actinomyces naeslundii.